The chain runs to 312 residues: Methionyl-tRNA formyltransferase (312 aa).

Position 110 to 113 (110 to 113) interacts with (6S)-5,6,7,8-tetrahydrofolate; the sequence is SLLP.

It belongs to the Fmt family.

The catalysed reaction is L-methionyl-tRNA(fMet) + (6R)-10-formyltetrahydrofolate = N-formyl-L-methionyl-tRNA(fMet) + (6S)-5,6,7,8-tetrahydrofolate + H(+). Attaches a formyl group to the free amino group of methionyl-tRNA(fMet). The formyl group appears to play a dual role in the initiator identity of N-formylmethionyl-tRNA by promoting its recognition by IF2 and preventing the misappropriation of this tRNA by the elongation apparatus. The polypeptide is Methionyl-tRNA formyltransferase (Koribacter versatilis (strain Ellin345)).